A 123-amino-acid chain; its full sequence is KTRTKDKYRVVYTDHQRLELEKEFHYSRYITIRRKSELAANLGLTERQVKIWFQNRRAKERKVNKKKQQQQQQQQQQPMPPTQLPLPLDGTPTPSGHPGSLCPTNAGLLGTPSPVPVKEEFLP.

Residues 5–64 constitute a DNA-binding region (homeobox); the sequence is KDKYRVVYTDHQRLELEKEFHYSRYITIRRKSELAANLGLTERQVKIWFQNRRAKERKVN. Residues 8–29 are interaction with DNA; it reads YRVVYTDHQRLELEKEFHYSRY. The interval 47–58 is interaction with 5-mCpG DNA; the sequence is RQVKIWFQNRRA. A compositionally biased stretch (basic residues) spans 57–68; that stretch reads RAKERKVNKKKQ. Residues 57 to 123 form a disordered region; the sequence is RAKERKVNKK…PVPVKEEFLP (67 aa).

It belongs to the Caudal homeobox family. In terms of tissue distribution, intestinal epithelium.

The protein resides in the nucleus. Functionally, plays a role in transcriptional regulation. Involved in activated KRAS-mediated transcriptional activation of PRKD1 in colorectal cancer (CRC) cells. Binds to the PRKD1 promoter in colorectal cancer (CRC) cells. Could play a role in the terminal differentiation of the intestine. Binds preferentially to methylated DNA. In Rattus norvegicus (Rat), this protein is Homeobox protein CDX-1 (Cdx1).